Here is a 77-residue protein sequence, read N- to C-terminus: Vacuolar ATPase assembly integral membrane protein VMA21 (77 aa).

The Cytoplasmic portion of the chain corresponds to 1–8 (MAVDVPTS). A helical membrane pass occupies residues 9-29 (VIVKLMFFTLAMVSFPVLTFF). Residues 30–41 (VSQQYTSNTLVN) lie on the Lumenal side of the membrane. Residues 42 to 62 (GGLAALAANVVLFAYVIMAFS) form a helical membrane-spanning segment. Residues 63-77 (EDVPQSDGKESKKQQ) lie on the Cytoplasmic side of the membrane. Residues 74-77 (KKQQ) carry the Prevents secretion from ER motif.

It belongs to the VMA21 family.

The protein localises to the endoplasmic reticulum membrane. The protein resides in the endoplasmic reticulum-Golgi intermediate compartment membrane. It localises to the cytoplasmic vesicle. Its subcellular location is the COPII-coated vesicle membrane. Functionally, required for the assembly of the V0 complex of the vacuolar ATPase (V-ATPase) in the endoplasmic reticulum. This chain is Vacuolar ATPase assembly integral membrane protein VMA21, found in Eremothecium gossypii (strain ATCC 10895 / CBS 109.51 / FGSC 9923 / NRRL Y-1056) (Yeast).